The following is a 239-amino-acid chain: 4-hydroxy-tetrahydrodipicolinate reductase (239 aa).

NAD(+) contacts are provided by residues 9 to 14 (GINGKI), 78 to 80 (GTT), and 104 to 107 (APNF). Histidine 134 (proton donor/acceptor) is an active-site residue. Residue histidine 135 participates in (S)-2,3,4,5-tetrahydrodipicolinate binding. Lysine 138 (proton donor) is an active-site residue. Residue 144 to 145 (GT) coordinates (S)-2,3,4,5-tetrahydrodipicolinate.

Belongs to the DapB family.

Its subcellular location is the cytoplasm. The enzyme catalyses (S)-2,3,4,5-tetrahydrodipicolinate + NAD(+) + H2O = (2S,4S)-4-hydroxy-2,3,4,5-tetrahydrodipicolinate + NADH + H(+). It catalyses the reaction (S)-2,3,4,5-tetrahydrodipicolinate + NADP(+) + H2O = (2S,4S)-4-hydroxy-2,3,4,5-tetrahydrodipicolinate + NADPH + H(+). Its pathway is amino-acid biosynthesis; L-lysine biosynthesis via DAP pathway; (S)-tetrahydrodipicolinate from L-aspartate: step 4/4. Catalyzes the conversion of 4-hydroxy-tetrahydrodipicolinate (HTPA) to tetrahydrodipicolinate. The polypeptide is 4-hydroxy-tetrahydrodipicolinate reductase (Coxiella burnetii (strain CbuG_Q212) (Coxiella burnetii (strain Q212))).